Here is a 449-residue protein sequence, read N- to C-terminus: TNF receptor-associated factor family protein DDB_G0272340 (449 aa).

The RING-type; degenerate zinc-finger motif lies at 33 to 76 (CPICEECIMDVNKCEALQCKEGHVHCRLCWMKSLESKKECMTCR). 2 consecutive TRAF-type zinc fingers follow at residues 133 to 187 (GHIK…IDDS) and 189 to 251 (VHYS…SELS). Positions 263 to 309 (MEATIDQHICKFEKSEKEYKKLELEYNRLKDDFKILQSELKVIRELK) form a coiled coil. The 127-residue stretch at 311–437 (NYQNKWVITN…QNSVTLNINI (127 aa)) folds into the MATH domain.

The protein belongs to the TNF receptor-associated factor family. A subfamily.

The protein localises to the cytoplasm. Probable adapter protein and signal transducer that links members of the tumor necrosis factor receptor family to different signaling pathways by association with the receptor cytoplasmic domain and kinases. In Dictyostelium discoideum (Social amoeba), this protein is TNF receptor-associated factor family protein DDB_G0272340.